The following is a 485-amino-acid chain: UDP-N-acetylmuramoyl-L-alanyl-D-glutamate--2,6-diaminopimelate ligase (485 aa).

Residue Ser28 participates in UDP-N-acetyl-alpha-D-muramoyl-L-alanyl-D-glutamate binding. Residue 108–114 (GTNGKTS) coordinates ATP. UDP-N-acetyl-alpha-D-muramoyl-L-alanyl-D-glutamate-binding positions include Asn147, 148–149 (TT), Ser175, and Arg183. Lys215 carries the post-translational modification N6-carboxylysine. Meso-2,6-diaminopimelate is bound by residues Arg374, 398-401 (DNPR), Gly449, and Glu453. The Meso-diaminopimelate recognition motif motif lies at 398 to 401 (DNPR).

This sequence belongs to the MurCDEF family. MurE subfamily. Mg(2+) is required as a cofactor. Post-translationally, carboxylation is probably crucial for Mg(2+) binding and, consequently, for the gamma-phosphate positioning of ATP.

The protein resides in the cytoplasm. It carries out the reaction UDP-N-acetyl-alpha-D-muramoyl-L-alanyl-D-glutamate + meso-2,6-diaminopimelate + ATP = UDP-N-acetyl-alpha-D-muramoyl-L-alanyl-gamma-D-glutamyl-meso-2,6-diaminopimelate + ADP + phosphate + H(+). The protein operates within cell wall biogenesis; peptidoglycan biosynthesis. Catalyzes the addition of meso-diaminopimelic acid to the nucleotide precursor UDP-N-acetylmuramoyl-L-alanyl-D-glutamate (UMAG) in the biosynthesis of bacterial cell-wall peptidoglycan. This chain is UDP-N-acetylmuramoyl-L-alanyl-D-glutamate--2,6-diaminopimelate ligase, found in Fusobacterium nucleatum subsp. nucleatum (strain ATCC 25586 / DSM 15643 / BCRC 10681 / CIP 101130 / JCM 8532 / KCTC 2640 / LMG 13131 / VPI 4355).